A 405-amino-acid polypeptide reads, in one-letter code: S-adenosylmethionine synthase (405 aa).

Residue 139-144 (GQGSVD) coordinates ATP.

Belongs to the AdoMet synthase 2 family. The cofactor is Mg(2+).

It carries out the reaction L-methionine + ATP + H2O = S-adenosyl-L-methionine + phosphate + diphosphate. The protein operates within amino-acid biosynthesis; S-adenosyl-L-methionine biosynthesis; S-adenosyl-L-methionine from L-methionine: step 1/1. Its function is as follows. Catalyzes the formation of S-adenosylmethionine from methionine and ATP. This chain is S-adenosylmethionine synthase, found in Thermococcus gammatolerans (strain DSM 15229 / JCM 11827 / EJ3).